Reading from the N-terminus, the 765-residue chain is ATP-dependent RNA helicase DBP4 (765 aa).

Residues 1 to 14 are compositionally biased toward basic residues; that stretch reads MAKPRRNNKNKKGQ. Residues 1–24 form a disordered region; it reads MAKPRRNNKNKKGQSRSQAREKEE. Positions 47 to 75 match the Q motif motif; sequence SQFSDLPITQETLRGLNESSFMSLTDIQK. The region spanning 78–252 is the Helicase ATP-binding domain; the sequence is IPIALKGEDL…RLSLTNPKRI (175 aa). Residue 91–98 participates in ATP binding; sequence ARTGSGKT. Residues 200 to 203 carry the DEAD box motif; that stretch reads DEAD. The region spanning 266–438 is the Helicase C-terminal domain; sequence SLDQYYIRIP…SIRPQLQSLC (173 aa). 3 disordered regions span residues 493 to 526, 552 to 576, and 641 to 735; these read KGGS…NEAS, NGSQ…RKDH, and KEQK…DKHN. Residues 558–568 show a composition bias toward acidic residues; the sequence is EDEDEEEEDDF. Basic and acidic residues-rich tracts occupy residues 641-653 and 678-688; these read KEQK…RETE and KEVEKRMRDEE.

This sequence belongs to the DEAD box helicase family. DDX10/DBP4 subfamily. In terms of assembly, interacts with the U3 and U14 snoRNAs. Associates with pre-ribosomal complexes.

It is found in the nucleus. It localises to the nucleolus. It carries out the reaction ATP + H2O = ADP + phosphate + H(+). ATP-dependent RNA helicase required for ribosome biogenesis. Involved in the release of U14 snoRNA in pre-ribosomal complexes. Required for pre-rRNA cleavage at site A2. In Scheffersomyces stipitis (strain ATCC 58785 / CBS 6054 / NBRC 10063 / NRRL Y-11545) (Yeast), this protein is ATP-dependent RNA helicase DBP4 (DBP4).